Reading from the N-terminus, the 1001-residue chain is Receptor-type tyrosine-protein phosphatase N2 (1001 aa).

The N-terminal stretch at 1 to 27 is a signal peptide; that stretch reads MGPPLPLLLLLLLPPPLPRALPAPASA. Residues 1 to 407 form an involved in localization to secretory granules; interaction with CPE region; the sequence is MGPPLPLLLL…PEGPLLEKSS (407 aa). Residues 28 to 600 are Extracellular-facing; that stretch reads RGRQLPGRLG…HQEEQEDSTK (573 aa). Arginine 259 is subject to Omega-N-methylarginine. 3 disordered regions span residues 271–296, 308–359, and 394–459; these read PFSA…SMDD, QQNS…DAPE, and SPLL…LEDQ. Over residues 312-325 the composition is skewed to basic and acidic residues; sequence EVDRLGPLKEEKAD. A Phosphoserine modification is found at serine 339. A compositionally biased stretch (basic and acidic residues) spans 340–355; sequence QESHGRGAEGQPREQT. Low complexity predominate over residues 394–404; it reads SPLLPEGPLLE. The segment covering 405-416 has biased composition (basic and acidic residues); the sequence is KSSREEIKKSEQ. Residues 417 to 428 show a composition bias toward acidic residues; the sequence is PEEVLSSEEETA. Residues serine 422 and serine 423 each carry the phosphoserine modification. Positions 429-459 are enriched in basic and acidic residues; the sequence is GVEHVRSRTYSKDLFERKPNSEPQPRRLEDQ. Asparagine 550 carries N-linked (GlcNAc...) asparagine glycosylation. Residues 601–621 traverse the membrane as a helical segment; that stretch reads FILLTFLSIACILGVLLASSL. The Cytoplasmic segment spans residues 622–1001; the sequence is AYCLRHNSHY…VNAILKALPQ (380 aa). Residues 652–661 carry the Tyrosine-based internalization motif motif; that stretch reads YQELCRQRMA. The tract at residues 663 to 705 is disordered; it reads RPQDRSEGPHTSRINSVSSQFSDGPMPSPSARSSTSSWSEEPV. The span at 674–684 shows a compositional bias: polar residues; the sequence is SRINSVSSQFS. 2 positions are modified to phosphoserine: serine 678 and serine 684. Over residues 691 to 705 the composition is skewed to low complexity; the sequence is PSARSSTSSWSEEPV. Threonine 697 carries the post-translational modification Phosphothreonine. The Tyrosine-protein phosphatase domain occupies 731-991; the sequence is LEKEWEALCA…EFALTAVAEE (261 aa). Substrate-binding positions include aspartate 899 and 931–937; that span reads CSDGAGR. Residue cysteine 931 is the Phosphocysteine intermediate of the active site. N6-acetyllysine is present on lysine 956. Glutamine 976 contacts substrate. The Leucine-based sorting signal motif lies at 990-996; it reads EEVNAIL.

It belongs to the protein-tyrosine phosphatase family. In terms of assembly, self-associates. Interacts (via cytoplasmic domain) with PTPRN (via cytoplasmic domain). Interacts (precursor form) with CPE. Interacts with HAP1 isoform A. Interacts with AP2A1 or AP2A2 and AP1G1; indicative for an association with adaptor protein complex 2 (AP-2) and adaptor protein complex 1 (AP-1). Interacts with AP2M1; indicative for an association with adaptor protein complex 2 (AP-2). Interacts with MYO5A. In terms of processing, subject to proteolytic cleavage at multiple sites during maturation of secretory granules. In the brain at least IA-2beta71, IA-2beta64 and IA-2beta60 have been detected, in the pancreas and a pancreatic beta cell line only IA-2beta60 has been detected. In terms of tissue distribution, detected in brain. Detected in pancreas islets (at protein level). Detected in pancreas and brain.

The protein localises to the cytoplasmic vesicle. The protein resides in the secretory vesicle membrane. Its subcellular location is the secretory vesicle. It localises to the synaptic vesicle membrane. It carries out the reaction O-phospho-L-tyrosyl-[protein] + H2O = L-tyrosyl-[protein] + phosphate. Plays a role in vesicle-mediated secretory processes. Required for normal accumulation of secretory vesicles in hippocampus, pituitary and pancreatic islets. Required for the accumulation of normal levels of insulin-containing vesicles and preventing their degradation. Plays a role in insulin secretion in response to glucose stimuli. Required for normal accumulation of the neurotransmitters norepinephrine, dopamine and serotonin in the brain. In females, but not in males, required for normal accumulation and secretion of pituitary hormones, such as luteinizing hormone (LH) and follicle-stimulating hormone (FSH). Required to maintain normal levels of renin expression and renin release. May regulate catalytic active protein-tyrosine phosphatases such as PTPRA through dimerization. Has phosphatidylinositol phosphatase activity; the PIPase activity is involved in its ability to regulate insulin secretion. Can dephosphorylate phosphatidylinositol 4,5-biphosphate (PI(4,5)P2), phosphatidylinositol 5-phosphate and phosphatidylinositol 3-phosphate. Regulates PI(4,5)P2 level in the plasma membrane and localization of cofilin at the plasma membrane and thus is indirectly involved in regulation of actin dynamics related to cell migration and metastasis; upon hydrolysis of PI(4,5)P2 cofilin is released from the plasma membrane and acts in the cytoplasm in severing F-actin filaments. In Mus musculus (Mouse), this protein is Receptor-type tyrosine-protein phosphatase N2 (Ptprn2).